A 522-amino-acid polypeptide reads, in one-letter code: 5,6-dihydroxyindole-2-carboxylic acid oxidase (522 aa).

An N-terminal signal peptide occupies residues 1-21 (MLRTSCGGMLLLVHALGLVRA). Residues 22 to 470 (QFPRACVTPE…RPLTPTQIVT (449 aa)) lie on the Lumenal, melanosome side of the membrane. Disulfide bonds link C27-C38, C39-C59, C50-C89, C91-C100, and C103-C112. 2 N-linked (GlcNAc...) asparagine glycosylation sites follow: N164 and N171. Zn(2+) contacts are provided by H182, H205, and H214. 2 disulfide bridges follow: C248-C251 and C280-C293. Residue N294 is glycosylated (N-linked (GlcNAc...) asparagine). Zn(2+) contacts are provided by H367 and H371. An N-linked (GlcNAc...) asparagine glycan is attached at N375. H394 provides a ligand contact to Zn(2+). A helical transmembrane segment spans residues 471–491 (VAVVAALLLVAIIFAASTCVV). Residues 492 to 522 (HLRGNRTEGRQPLLGDQYQRYEDHNKTQSVV) lie on the Cytoplasmic side of the membrane.

Belongs to the tyrosinase family. The cofactor is Cu(2+). Zn(2+) serves as cofactor.

It is found in the melanosome membrane. It catalyses the reaction 2 5,6-dihydroxyindole-2-carboxylate + O2 = 2 indole-5,6-quinone-2-carboxylate + 2 H2O. Its pathway is pigment biosynthesis; melanin biosynthesis. Plays a role in melanin biosynthesis. Catalyzes the oxidation of 5,6-dihydroxyindole-2-carboxylic acid (DHICA) into indole-5,6-quinone-2-carboxylic acid. May regulate or influence the type of melanin synthesized. Also to a lower extent, capable of hydroxylating tyrosine and producing melanin. The chain is 5,6-dihydroxyindole-2-carboxylic acid oxidase (tyrp1) from Carassius auratus (Goldfish).